The following is a 711-amino-acid chain: MRRWLSLVLSMSFVFSAIFIVSDTQKVTVEAAGNLNKVNFTSDVVYQIVVDRFVDGNTSNNPSGALFSSGCTNLRKYCGGDWQGIINKINDGYLTDMGVTAIWISQPVENVFSVMNDASGSASYHGYWARDFKKPNPFFGTLSDFQRLVDAAHAKGIKVIIDFAPNHTSPASETNPSYMENGRLYDNGTLLGGYTNDANMYFHHNGGTTFSSLEDGIYRNLFDLADLNHQNPVIDRYLKDAVKMWIDMGIDGIRMDAVKHMPFGWQKSLMDEIDNYRPVFTFGEWFLSENEVDANNHYFANESGMSLLDFRFGQKLRQVLRNNSDNWYGFNQMIQDTASAYDEVLDQVTFIDNHDMDRFMIDGGDPRKVDMALAVLLTSRGVPNIYYGTEQYMTGNGDPNNRKMMSSFNKNTRAYQVIQKLSSLRRNNPALAYGDTEQRWINGDVYVYERQFGKDVVLVAVNRSSSSNYSITGLFTALPAGTYTDQLGGLLDGNTIQVGSNGSVNAFDLGPGEVGVWAYSATESTPIIGHVGPMMGQVGHQVTIDGEGFGTNTGTVKFGTTAANVVSWSNNQIVVAVPNVSPGKYNITVQSSSGQTSAAYDNFEVLTNDQVSVRFVVNNATTNLGQNIYIVGNVYELGNWDTSKAIGPMFNQVVYSYPTWYIDVSVPEGKTIEFKFIKKDSQGNVTWESGSNHVYTTPTNTTGKIIVDWQN.

The signal sequence occupies residues 1–31; that stretch reads MRRWLSLVLSMSFVFSAIFIVSDTQKVTVEA. The tract at residues 32–165 is A1; that stretch reads AGNLNKVNFT…GIKVIIDFAP (134 aa). Ca(2+) is bound by residues Asp-55, Asn-57, Asn-60, and Asn-61. Cys-71 and Cys-78 are oxidised to a cystine. Positions 79 and 81 each coordinate Ca(2+). Position 127–128 (127–128) interacts with substrate; sequence YW. Asn-166 is a Ca(2+) binding site. The interval 166 to 229 is b; that stretch reads NHTSPASETN…NLFDLADLNH (64 aa). Residue His-167 participates in substrate binding. Position 217 (Ile-217) interacts with Ca(2+). Residue 220 to 223 participates in substrate binding; it reads NLFD. Asp-226 serves as a coordination point for Ca(2+). The interval 230-433 is A2; it reads QNPVIDRYLK…LRRNNPALAY (204 aa). Arg-254 is a binding site for substrate. The active-site Nucleophile is Asp-256. 259–260 is a substrate binding site; that stretch reads KH. His-260 is a binding site for Ca(2+). The active-site Proton donor is the Glu-284. Residues His-354, Asp-398, and Arg-402 each coordinate substrate. The interval 434-522 is c; sequence GDTEQRWING…EVGVWAYSAT (89 aa). Residues 523–606 form a d region; that stretch reads ESTPIIGHVG…SAAYDNFEVL (84 aa). Positions 526-604 constitute an IPT/TIG domain; the sequence is PIIGHVGPMM…QTSAAYDNFE (79 aa). In terms of domain architecture, CBM20 spans 605 to 711; that stretch reads VLTNDQVSVR…TGKIIVDWQN (107 aa). Positions 607-711 are e; sequence TNDQVSVRFV…TGKIIVDWQN (105 aa).

It belongs to the glycosyl hydrolase 13 family. As to quaternary structure, monomer. It depends on Ca(2+) as a cofactor.

It is found in the secreted. The enzyme catalyses Cyclizes part of a (1-&gt;4)-alpha-D-glucan chain by formation of a (1-&gt;4)-alpha-D-glucosidic bond.. The polypeptide is Cyclomaltodextrin glucanotransferase (cgt) (Geobacillus stearothermophilus (Bacillus stearothermophilus)).